The sequence spans 85 residues: Beta-insect depressant toxin BjIT2 (85 aa).

A signal peptide spans 1-21 (MKLLLLLVISASMLLECLVNA). Residues 22-82 (DGYIRKKDGC…TWKSSTNTCG (61 aa)) enclose the LCN-type CS-alpha/beta domain. 4 disulfides stabilise this stretch: C31-C81, C35-C56, C42-C63, and C46-C65. Positions 83–85 (RKK) are cleaved as a propeptide — removed by a carboxypeptidase.

Belongs to the long (4 C-C) scorpion toxin superfamily. Sodium channel inhibitor family. Beta subfamily. Post-translationally, C-terminal basic residues are removed by a carboxypeptidase. Expressed by the venom gland.

The protein localises to the secreted. In terms of biological role, depressant insect beta-toxins cause a transient contraction paralysis followed by a slow flaccid paralysis. They bind voltage-independently at site-4 of sodium channels (Nav) and shift the voltage of activation toward more negative potentials thereby affecting sodium channel activation and promoting spontaneous and repetitive firing. This toxin is active only on insects. In Hottentotta judaicus (Black scorpion), this protein is Beta-insect depressant toxin BjIT2.